Here is a 164-residue protein sequence, read N- to C-terminus: Diphosphoinositol polyphosphate phosphohydrolase 3-alpha (164 aa).

Residues Arg9, 17 to 19, and 38 to 40 each bind substrate; these read KKR and SSR. In terms of domain architecture, Nudix hydrolase spans 17 to 144; it reads KKRAACLCFR…VHAEYLEKLK (128 aa). Mg(2+) contacts are provided by Gly49 and Glu65. A Nudix box motif is present at residues 50–71; the sequence is GGMEPEEEPGGAAVREVYEEAG. Glu68 (proton acceptor) is an active-site residue. A Mg(2+)-binding site is contributed by Glu69. Residues 89 to 91, Arg115, and Lys133 each bind substrate; that span reads PKH. The tract at residues 144-164 is disordered; it reads KLGGSPTNGNSMAPSSPDSDP. The span at 148-164 shows a compositional bias: polar residues; that stretch reads SPTNGNSMAPSSPDSDP.

The protein belongs to the Nudix hydrolase family. DIPP subfamily. Requires Mg(2+) as cofactor. It depends on Mn(2+) as a cofactor. Mainly expressed in testis and, at lower level in brain. According to PubMed:12121577, it is widely expressed.

It localises to the cytoplasm. The catalysed reaction is diphospho-myo-inositol polyphosphate + H2O = myo-inositol polyphosphate + phosphate.. The enzyme catalyses P(1),P(6)-bis(5'-adenosyl) hexaphosphate + H2O = adenosine 5'-pentaphosphate + AMP + 2 H(+). It carries out the reaction P(1),P(5)-bis(5'-adenosyl) pentaphosphate + H2O = adenosine 5'-tetraphosphate + AMP + 2 H(+). Functionally, cleaves a beta-phosphate from the diphosphate groups in PP-InsP5 (diphosphoinositol pentakisphosphate), suggesting that it may play a role in signal transduction. Also able to catalyze the hydrolysis of dinucleoside oligophosphates, with Ap6A and Ap5A being the preferred substrates. The major reaction products are ADP and p4a from Ap6A and ADP and ATP from Ap5A. Also able to hydrolyze 5-phosphoribose 1-diphosphate. In Homo sapiens (Human), this protein is Diphosphoinositol polyphosphate phosphohydrolase 3-alpha (NUDT10).